The primary structure comprises 71 residues: Dermaseptin-PT9 (71 aa).

The signal sequence occupies residues 1–22 (MAFLKKSLFLVLFLGLVSLSIC). A propeptide spanning residues 23–43 (EEEKRENEMEQEDDEQSEMKR) is cleaved from the precursor. Val-68 is subject to Valine amide. Residues 69 to 71 (GEQ) constitute a propeptide that is removed on maturation.

This sequence belongs to the frog skin active peptide (FSAP) family. Dermaseptin subfamily. As to expression, expressed by the skin glands.

The protein resides in the secreted. It is found in the target cell membrane. In terms of biological role, antimicrobial peptide with activity against fungi, Gram-positive and Gram-negative bacteria. Is active against S.aureus (MIC=16 uM), MRSA (MIC=32 uM), E.faecalis (MIC=16 uM), E.coli (MIC=8 uM), P.aeruginosa (MIC=16 uM), K.pneumoniae (MIC=8 uM), and C.albicans (MIC=64 uM). Also inhibits biofilm formation. Acts by disrupting cell membranes. Also exhibits anti-proliferative effect against various human cancer cells. Shows weak hemolytic activity towards horse erythrocytes. This Phyllomedusa tarsius (Brownbelly leaf frog) protein is Dermaseptin-PT9.